The chain runs to 262 residues: Zinc finger protein 138 (262 aa).

The segment at 110-132 (FRCKECDKSLCMLSRLTQHKKIH) adopts a C2H2-type 1 zinc-finger fold. Residues 138-160 (YKCEECGKTFNWSTNLSKPKKIH) form a C2H2-type 2; degenerate zinc finger. Residues 166 to 188 (YKCEVCGKAFHQSSILTKHKIIR) form a C2H2-type 3; degenerate zinc finger. Residues 194-216 (YKCAHCGKAFKQSSHLTRHKIIH) form a C2H2-type 4 zinc finger. Residues 222–244 (YKCEQCGKVFKQSPTLTKHQIIY) form a C2H2-type 5; degenerate zinc finger. The segment at 250–262 (YKCEECGKAFNLS) adopts a C2H2-type 6; degenerate zinc-finger fold.

Belongs to the krueppel C2H2-type zinc-finger protein family.

The protein localises to the nucleus. Functionally, may be involved in transcriptional regulation as a repressor. This is Zinc finger protein 138 (ZNF138) from Homo sapiens (Human).